Consider the following 270-residue polypeptide: HTH-type transcriptional repressor DrrR1 (270 aa).

Over residues 1-11 (MESGTSRTSDT) the composition is skewed to low complexity. Residues 1–28 (MESGTSRTSDTGGTGRAGSTETSGSGDI) are disordered. Residues 49 to 109 (TLTLDRVVEA…LMLDRVQRPS (61 aa)) enclose the HTH tetR-type domain. The H-T-H motif DNA-binding region spans 72–91 (SMRRVAAELGTGTMSLYRYV).

It localises to the cytoplasm. With respect to regulation, daunorubicin and doxorubicin can induce dissociation of DrrR1 from its DNA complex. Ampicillin cannot release DrrR1 from the DNA complex at the same concentrations. Transcriptional regulator that modulates the expression of the drrA2-drrB2 genes, which encode an ABC transporter involved in daunorubicin efflux, in response to intracellular daunorubicin/doxorubicin accumulation. In the absence of daunorubicin or doxorubicin, binds directly to the drrA2-drrB2 promoter region and negatively regulates expression of the genes. In the presence of daunorubicin or doxorubicin, DrrR1 dissociates from DNA, leading to the transcription of the genes. The chain is HTH-type transcriptional repressor DrrR1 from Streptomyces coeruleorubidus.